The primary structure comprises 177 residues: Ubiquitin-conjugating enzyme E2 C (177 aa).

Residues 1 to 31 are disordered; sequence MSGQNIDPAANQVRQKERPRDMTTSKERHSV. Residues 14–30 show a composition bias toward basic and acidic residues; sequence RQKERPRDMTTSKERHS. One can recognise a UBC core domain in the interval 30 to 175; it reads SVSKRLQQEL…LHEKYKTAQS (146 aa). The active-site Glycyl thioester intermediate is Cys-114.

Belongs to the ubiquitin-conjugating enzyme family. In terms of assembly, component of the APC/C complex. Autoubiquitinated by the APC/C complex, leading to its degradation by the proteasome.

The catalysed reaction is S-ubiquitinyl-[E1 ubiquitin-activating enzyme]-L-cysteine + [E2 ubiquitin-conjugating enzyme]-L-cysteine = [E1 ubiquitin-activating enzyme]-L-cysteine + S-ubiquitinyl-[E2 ubiquitin-conjugating enzyme]-L-cysteine.. It catalyses the reaction S-ubiquitinyl-[E1 ubiquitin-activating enzyme]-L-cysteine + [acceptor protein]-L-lysine = [E1 ubiquitin-activating enzyme]-L-cysteine + N(6)-monoubiquitinyl-[acceptor protein]-L-lysine.. It functions in the pathway protein modification; protein ubiquitination. In terms of biological role, catalyzes the covalent attachment of ubiquitin to other proteins. Acts as an essential factor of the anaphase promoting complex/cyclosome (APC/C), a cell cycle-regulated ubiquitin ligase that is essential for the transition from metaphase to anaphase in mitosis. Involved in both degradation of proteins responsible for maintaining sister chromatid cohesion at the onset of anaphase and of mitotic cyclins A and B at the exit of mitosis. Acts by initiating polyubiquitin chains on APC/C substrates, leading to the degradation of APC/C substrates by the proteasome and promoting mitotic exit. This Spisula solidissima (Atlantic surf-clam) protein is Ubiquitin-conjugating enzyme E2 C (UBE2C).